Consider the following 242-residue polypeptide: Immunity protein TsiV2 (242 aa).

3 consecutive transmembrane segments (helical) span residues 39–59 (VFGAISAGIVPLWPFIFFADI), 66–86 (FWGFICFSLAGMAAARYLFMP), and 118–138 (FAWVGIAVCLLALAVVGPLAF).

The protein localises to the host membrane. In terms of biological role, immunity protein that plays a role in preventing early activation of toxin VasX. The sequence is that of Immunity protein TsiV2 from Vibrio cholerae serotype O1 (strain ATCC 39315 / El Tor Inaba N16961).